Consider the following 142-residue polypeptide: Ribosome-binding factor A (142 aa).

Basic and acidic residues predominate over residues 118-130; it reads DKAKQKQAGREDD. The interval 118–142 is disordered; it reads DKAKQKQAGREDDTPSVDEQEKDTD. A compositionally biased stretch (acidic residues) spans 131-142; the sequence is TPSVDEQEKDTD.

The protein belongs to the RbfA family. In terms of assembly, monomer. Binds 30S ribosomal subunits, but not 50S ribosomal subunits or 70S ribosomes.

Its subcellular location is the cytoplasm. Functionally, one of several proteins that assist in the late maturation steps of the functional core of the 30S ribosomal subunit. Associates with free 30S ribosomal subunits (but not with 30S subunits that are part of 70S ribosomes or polysomes). Required for efficient processing of 16S rRNA. May interact with the 5'-terminal helix region of 16S rRNA. This chain is Ribosome-binding factor A, found in Shewanella denitrificans (strain OS217 / ATCC BAA-1090 / DSM 15013).